Here is a 1048-residue protein sequence, read N- to C-terminus: Protein argonaute 7 (1048 aa).

The span at 1–14 (MEGEREGVVAKNED) shows a compositional bias: basic and acidic residues. Disordered stretches follow at residues 1-50 (MEGE…GSSG) and 121-141 (KAAD…KKPP). The span at 16-37 (AGGGGGGLGTGGNGGGGGGGSA) shows a compositional bias: gly residues. A compositionally biased stretch (basic residues) spans 131-141 (MWKHRPSKKPP). Positions 422–530 (KRCDFLKDLP…VPMELCVVCE (109 aa)) constitute a PAZ domain. The Piwi domain occupies 709 to 1017 (LLICVMERRH…AAYRGRLYLE (309 aa)).

The protein belongs to the argonaute family. Ago subfamily. As to expression, expressed in the reproductive shoot apex.

Its function is as follows. Involved in the RNA silencing pathway. May bind to short RNAs such as microRNAs (miRNAs) or short interfering RNAs (siRNAs), and represses the translation of mRNAs which are complementary to them. Regulates shoot apical meristem (SAM) initiation and maintenance and leaf polarization through the trans-acting siRNAS (ta-siRNAs) pathway which probably modulates the expression of the ARF2, ARF3, ARF4, ARF14 and ARF15 genes. The sequence is that of Protein argonaute 7 (AGO7) from Oryza sativa subsp. japonica (Rice).